The following is a 326-amino-acid chain: Pyruvate dehydrogenase E1 component subunit beta (326 aa).

Residue Glu60 coordinates thiamine diphosphate. Ile113, Ala161, Ile162, and Asn166 together coordinate K(+).

In terms of assembly, heterodimer of an alpha and a beta chain. Thiamine diphosphate serves as cofactor.

The protein resides in the plastid. It is found in the chloroplast. It carries out the reaction N(6)-[(R)-lipoyl]-L-lysyl-[protein] + pyruvate + H(+) = N(6)-[(R)-S(8)-acetyldihydrolipoyl]-L-lysyl-[protein] + CO2. The pyruvate dehydrogenase complex catalyzes the overall conversion of pyruvate to acetyl-CoA and CO(2). It contains multiple copies of three enzymatic components: pyruvate dehydrogenase (E1), dihydrolipoamide acetyltransferase (E2) and lipoamide dehydrogenase (E3). This is Pyruvate dehydrogenase E1 component subunit beta (pdhB) from Chaetosphaeridium globosum (Charophycean green alga).